Reading from the N-terminus, the 240-residue chain is Insulin-like growth factor-binding protein 3 receptor (240 aa).

A signal peptide spans 1-38 (MGNCQAGHNLHLCLAHHPPLVCATLILLLLGLSGLGLG). The Extracellular segment spans residues 39 to 204 (SFLLTHRTGL…SEELALCGSR (166 aa)). N-linked (GlcNAc...) asparagine glycans are attached at residues Asn-73, Asn-101, and Asn-167. The chain crosses the membrane as a helical span at residues 205 to 225 (LLVLGSFLLLFCGLLCCVTAM). At 226–240 (CFHPRRESHWSRTRL) the chain is on the cytoplasmic side.

As to quaternary structure, interacts with IGFBP3. Interacts with CASP8. Widely expressed in normal tissues but suppressed in prostate and breast tumor.

It is found in the cell membrane. Functionally, cell death receptor specific for IGFBP3, may mediate caspase-8-dependent apoptosis upon ligand binding. This chain is Insulin-like growth factor-binding protein 3 receptor (TMEM219), found in Homo sapiens (Human).